A 190-amino-acid polypeptide reads, in one-letter code: MKLVVGLGNPGRKYDQTRHNIGFMVADALVRRYVGSPPTTKFEGEISECRIENEKVLVLCPQTYMNASGQSVRKAMDFYKLSPEDILVICDDLNLETGRVRLRRSGSAGGQKGLVDIIRHLGSEQWARLKIGIGRPPAKWQVSDYVLGKFDKTELEEMEHAIVHSCDATACWVADGVTEAMNRYNAASGT.

TRNA is bound at residue Tyr14. His19 functions as the Proton acceptor in the catalytic mechanism. TRNA contacts are provided by Tyr64 and Asn66.

The protein belongs to the PTH family. As to quaternary structure, monomer.

The protein resides in the cytoplasm. The enzyme catalyses an N-acyl-L-alpha-aminoacyl-tRNA + H2O = an N-acyl-L-amino acid + a tRNA + H(+). Hydrolyzes ribosome-free peptidyl-tRNAs (with 1 or more amino acids incorporated), which drop off the ribosome during protein synthesis, or as a result of ribosome stalling. Its function is as follows. Catalyzes the release of premature peptidyl moieties from peptidyl-tRNA molecules trapped in stalled 50S ribosomal subunits, and thus maintains levels of free tRNAs and 50S ribosomes. This chain is Peptidyl-tRNA hydrolase, found in Rhodopirellula baltica (strain DSM 10527 / NCIMB 13988 / SH1).